The primary structure comprises 380 residues: Cytochrome b (380 aa).

A run of 4 helical transmembrane segments spans residues 34–54 (FGSLLGVCLIAQIATGLFLAM), 78–99 (WLLRNLHANGASFFFICIYFHI), 114–134 (WNIGVILLFLVMATAFVGYVL), and 179–199 (FFTFHFILPFIIAAASMINLL). Residues H84 and H98 each contribute to the heme b site. A heme b-binding site is contributed by H183. H202 serves as a coordination point for a ubiquinone. The next 4 helical transmembrane spans lie at 227–247 (YKDLLGFVIMLGALASLSTFA), 289–309 (LGGVLALLLSIMILFLMPIIH), 321–341 (IAKTFFWALIANTAILTWIGG), and 348–368 (FITIGQIASGLYFLIFVLLIP).

The protein belongs to the cytochrome b family. The cytochrome bc1 complex contains 3 respiratory subunits (MT-CYB, CYC1 and UQCRFS1), 2 core proteins (UQCRC1 and UQCRC2) and probably 6 low-molecular weight proteins. Heme b serves as cofactor.

It is found in the mitochondrion inner membrane. Component of the ubiquinol-cytochrome c reductase complex (complex III or cytochrome b-c1 complex) that is part of the mitochondrial respiratory chain. The b-c1 complex mediates electron transfer from ubiquinol to cytochrome c. Contributes to the generation of a proton gradient across the mitochondrial membrane that is then used for ATP synthesis. This is Cytochrome b (mt-cyb) from Pelophylax plancyi (Korean pond frog).